The primary structure comprises 141 residues: Large ribosomal subunit protein uL11 (141 aa).

Belongs to the universal ribosomal protein uL11 family. Part of the ribosomal stalk of the 50S ribosomal subunit. Interacts with L10 and the large rRNA to form the base of the stalk. L10 forms an elongated spine to which L12 dimers bind in a sequential fashion forming a multimeric L10(L12)X complex. Post-translationally, one or more lysine residues are methylated.

Forms part of the ribosomal stalk which helps the ribosome interact with GTP-bound translation factors. The polypeptide is Large ribosomal subunit protein uL11 (Levilactobacillus brevis (strain ATCC 367 / BCRC 12310 / CIP 105137 / JCM 1170 / LMG 11437 / NCIMB 947 / NCTC 947) (Lactobacillus brevis)).